We begin with the raw amino-acid sequence, 188 residues long: UPF0301 protein MCA2336 2 (188 aa).

It belongs to the UPF0301 (AlgH) family.

This is UPF0301 protein MCA2336 2 from Methylococcus capsulatus (strain ATCC 33009 / NCIMB 11132 / Bath).